A 306-amino-acid chain; its full sequence is UDP-3-O-acyl-N-acetylglucosamine deacetylase (306 aa).

The Zn(2+) site is built by histidine 79, histidine 239, and aspartate 243. Residue histidine 266 is the Proton donor of the active site.

The protein belongs to the LpxC family. Zn(2+) serves as cofactor.

The catalysed reaction is a UDP-3-O-[(3R)-3-hydroxyacyl]-N-acetyl-alpha-D-glucosamine + H2O = a UDP-3-O-[(3R)-3-hydroxyacyl]-alpha-D-glucosamine + acetate. Its pathway is glycolipid biosynthesis; lipid IV(A) biosynthesis; lipid IV(A) from (3R)-3-hydroxytetradecanoyl-[acyl-carrier-protein] and UDP-N-acetyl-alpha-D-glucosamine: step 2/6. Its function is as follows. Catalyzes the hydrolysis of UDP-3-O-myristoyl-N-acetylglucosamine to form UDP-3-O-myristoylglucosamine and acetate, the committed step in lipid A biosynthesis. The chain is UDP-3-O-acyl-N-acetylglucosamine deacetylase from Haemophilus ducreyi (strain 35000HP / ATCC 700724).